We begin with the raw amino-acid sequence, 531 residues long: Cytochrome c oxidase subunit 1 (531 aa).

Residues Ile-18–Ile-38 traverse the membrane as a helical segment. Positions 41 and 46 each coordinate Ca(2+). The next 6 helical transmembrane spans lie at Val-59–Gly-79, Ile-103–Thr-123, Ala-149–Val-169, Pro-185–Leu-205, Leu-237–Ile-257, and Ile-269–Val-289. Residue His-64 coordinates Fe(II)-heme a. Residue His-243 participates in Cu cation binding. The 1'-histidyl-3'-tyrosine (His-Tyr) cross-link spans His-243–Tyr-247. Residue Tyr-247 coordinates O2. Cu cation is bound by residues His-292 and His-293. 2 helical membrane passes run Met-312–Gly-332 and Met-340–Leu-360. Mg(2+) is bound by residues His-370 and Asp-371. His-378 provides a ligand contact to heme a3. His-380 contributes to the Fe(II)-heme a binding site. A run of 2 helical transmembrane segments spans residues Met-385 to Leu-405 and Val-414 to Gly-434. Pro-443 lines the Ca(2+) pocket. A helical transmembrane segment spans residues Trp-458–Leu-478.

The protein belongs to the heme-copper respiratory oxidase family. As to quaternary structure, component of the cytochrome c oxidase (complex IV, CIV), a multisubunit enzyme composed of a catalytic core of 3 subunits and several supernumerary subunits. The complex exists as a monomer or a dimer and forms supercomplexes (SCs) in the inner mitochondrial membrane with ubiquinol-cytochrome c oxidoreductase (cytochrome b-c1 complex, complex III, CIII). Requires heme as cofactor. The cofactor is Cu cation.

It is found in the mitochondrion inner membrane. It catalyses the reaction 4 Fe(II)-[cytochrome c] + O2 + 8 H(+)(in) = 4 Fe(III)-[cytochrome c] + 2 H2O + 4 H(+)(out). It participates in energy metabolism; oxidative phosphorylation. Component of the cytochrome c oxidase, the last enzyme in the mitochondrial electron transport chain which drives oxidative phosphorylation. The respiratory chain contains 3 multisubunit complexes succinate dehydrogenase (complex II, CII), ubiquinol-cytochrome c oxidoreductase (cytochrome b-c1 complex, complex III, CIII) and cytochrome c oxidase (complex IV, CIV), that cooperate to transfer electrons derived from NADH and succinate to molecular oxygen, creating an electrochemical gradient over the inner membrane that drives transmembrane transport and the ATP synthase. Cytochrome c oxidase is the component of the respiratory chain that catalyzes the reduction of oxygen to water. Electrons originating from reduced cytochrome c in the intermembrane space (IMS) are transferred via the dinuclear copper A center (CU(A)) of subunit 2 and heme A of subunit 1 to the active site in subunit 1, a binuclear center (BNC) formed by heme A3 and copper B (CU(B)). The BNC reduces molecular oxygen to 2 water molecules using 4 electrons from cytochrome c in the IMS and 4 protons from the mitochondrial matrix. In Candida albicans (strain SC5314 / ATCC MYA-2876) (Yeast), this protein is Cytochrome c oxidase subunit 1 (COX1).